We begin with the raw amino-acid sequence, 485 residues long: Adenosylhomocysteinase (485 aa).

Substrate is bound by residues Thr-64, Asp-139, and Glu-205. 206-208 (TTT) serves as a coordination point for NAD(+). 2 residues coordinate substrate: Lys-235 and Asp-239. NAD(+) contacts are provided by residues Asn-240, 269–274 (GYGDVG), Glu-292, Asn-327, 348–350 (IGH), and Asn-397.

This sequence belongs to the adenosylhomocysteinase family. The cofactor is NAD(+).

It carries out the reaction S-adenosyl-L-homocysteine + H2O = L-homocysteine + adenosine. It participates in amino-acid biosynthesis; L-homocysteine biosynthesis; L-homocysteine from S-adenosyl-L-homocysteine: step 1/1. In terms of biological role, adenosylhomocysteine is a competitive inhibitor of S-adenosyl-L-methionine-dependent methyl transferase reactions; therefore adenosylhomocysteinase may play a key role in the control of methylations via regulation of the intracellular concentration of adenosylhomocysteine. This chain is Adenosylhomocysteinase (SAHH), found in Medicago sativa (Alfalfa).